We begin with the raw amino-acid sequence, 286 residues long: Aquaporin PIP1-3 (286 aa).

Position 1 is an N-acetylmethionine (Met1). Residues 1-33 (MEGKEEDVRVGANKFPERQPIGTSAQTDKDYKE) are disordered. Topologically, residues 1 to 54 (MEGKEEDVRVGANKFPERQPIGTSAQTDKDYKEPPPAPFFEPGELSSWSFYRAG) are cytoplasmic. The helical transmembrane segment at 55-75 (IAEFIATFLFLYITVLTVMGV) threads the bilayer. Residues 76-81 (KRAPNM) are Extracellular-facing. Residues 82–102 (CASVGIQGIAWAFGGMIFALV) form a helical membrane-spanning segment. Topologically, residues 103 to 132 (YCTAGISGGHINPAVTFGLFLARKLSLTRA) are cytoplasmic. Positions 114 to 116 (NPA) match the NPA 1 motif. A helical membrane pass occupies residues 133-153 (VFYIVMQCLGAICGAGVVKGF). The Extracellular segment spans residues 154-174 (QPNPYQTLGGGANTVAHGYTK). The chain crosses the membrane as a helical span at residues 175 to 195 (GSGLGAEIIGTFVLVYTVFSA). Topologically, residues 196–208 (TDAKRSARDSHVP) are cytoplasmic. Residues 209-229 (ILAPLPIGFAVFLVHLATIPI) traverse the membrane as a helical segment. The Extracellular portion of the chain corresponds to 230 to 256 (TGTGINPARSLGAAIIYNKDHAWDDHW). The NPA 2 signature appears at 235–237 (NPA). A helical membrane pass occupies residues 257–277 (IFWVGPFIGAALAALYHQLVI). The Cytoplasmic portion of the chain corresponds to 278–286 (RAIPFKSRS). Residue Ser284 is modified to Phosphoserine.

The protein belongs to the MIP/aquaporin (TC 1.A.8) family. PIP (TC 1.A.8.11) subfamily. In terms of tissue distribution, expressed in roots, above ground, ripening fruit, flower buds, green siliques and senescing leaves.

The protein localises to the cell membrane. Water channel required to facilitate the transport of water across cell membrane. Its function is impaired by Hg(2+). The sequence is that of Aquaporin PIP1-3 (PIP1-3) from Arabidopsis thaliana (Mouse-ear cress).